The sequence spans 215 residues: 3-dehydroquinate dehydratase (215 aa).

Residues 27–29 and R54 each bind 3-dehydroquinate; that span reads ELR. Residue H112 is the Proton donor/acceptor of the active site. The active-site Schiff-base intermediate with substrate is the K139. 2 residues coordinate 3-dehydroquinate: R176 and Q198.

This sequence belongs to the type-I 3-dehydroquinase family. In terms of assembly, homodimer.

It carries out the reaction 3-dehydroquinate = 3-dehydroshikimate + H2O. It participates in metabolic intermediate biosynthesis; chorismate biosynthesis; chorismate from D-erythrose 4-phosphate and phosphoenolpyruvate: step 3/7. In terms of biological role, involved in the third step of the chorismate pathway, which leads to the biosynthesis of aromatic amino acids. Catalyzes the cis-dehydration of 3-dehydroquinate (DHQ) and introduces the first double bond of the aromatic ring to yield 3-dehydroshikimate. This Pyrococcus abyssi (strain GE5 / Orsay) protein is 3-dehydroquinate dehydratase.